A 433-amino-acid chain; its full sequence is DNA polymerase processivity factor (433 aa).

The disordered stretch occupies residues 274-433; sequence RGDPFDKNYV…VPNTKKQKCG (160 aa). 3 stretches are compositionally biased toward gly residues: residues 289-298, 325-336, and 344-359; these read SRGGGGGGGS, GLGGLGGGGGGG, and GGGG…GGGG. Positions 360–376 are enriched in basic and acidic residues; the sequence is GDHDHGLSSKEKYEQHK. The segment covering 385–398 has biased composition (gly residues); that stretch reads GGSGGGGGGGGGGL. Residue K410 forms a Glycyl lysine isopeptide (Lys-Gly) (interchain with G-Cter in host SUMO1) linkage. A phosphoserine mark is found at S413, S415, and S418.

This sequence belongs to the herpesviridae polymerase accessory protein family. Forms homodimers. Interacts with host SMARCB1. Interacts with host NCL/nucleolin; this interaction is important for the organization of proteins within viral replication compartments. Interacts with UL112/UL113; this interaction is necessary for efficient viral DNA replication. Interacts with UL84. Interacts with the uracil DNA glycosylase UL114. Interacts with the DNA polymerase catalytic subunit UL54. Interacts with host IRF3. Interacts with host RELA. Post-translationally, phosphorylated by UL97 on serine residues, phosphorylation seems important for UL44 nuclear entry but does not directly affect its role in replication. In terms of processing, sumoylated. Sumoylation on Lys-410 increases viral DNA replication.

It localises to the virion. It is found in the host nucleus. Functionally, accessory subunit of the DNA polymerase that plays an essential role in viral DNA replication and acts by increasing the processivity of polymerization. Forms dimers that binds to double-stranded DNA and UL54 specifically to stimulates long chain DNA synthesis efficiently. Plays an important role in maintaining the structure of viral replication compartments by interacting with host nucleolin/NUC. In addition, suppresses innate immune responses through effects on host IRF3 and NF-kappa-B. Mechanistically, interfere with the binding of IRF3 and the p65 NF-kappa-B subunit to the promoters of antiviral genes, thereby inhibiting the expression of these genes. This is DNA polymerase processivity factor (UL44) from Homo sapiens (Human).